Here is a 152-residue protein sequence, read N- to C-terminus: NADH-ubiquinone oxidoreductase chain 4 (152 aa).

Transmembrane regions (helical) follow at residues 2-22 (FSGATTLMIAHGLTSSMYFCL), 43-63 (ILLPLTAFWWLTASLTNLALP), 84-104 (ITIVLTGLNMLITALYSLHMF), and 128-148 (MLMFMHLAPIILLSLNPNIIL).

It belongs to the complex I subunit 4 family.

The protein resides in the mitochondrion membrane. The enzyme catalyses a ubiquinone + NADH + 5 H(+)(in) = a ubiquinol + NAD(+) + 4 H(+)(out). In terms of biological role, core subunit of the mitochondrial membrane respiratory chain NADH dehydrogenase (Complex I) that is believed to belong to the minimal assembly required for catalysis. Complex I functions in the transfer of electrons from NADH to the respiratory chain. The immediate electron acceptor for the enzyme is believed to be ubiquinone. The sequence is that of NADH-ubiquinone oxidoreductase chain 4 (MT-ND4) from Macaca fascicularis (Crab-eating macaque).